The sequence spans 225 residues: Suppressor of cytokine signaling 3 (225 aa).

The segment at 22–33 (LKTFSSKSEYQL) is kinase inhibitory region (KIR). The tract at residues 34 to 45 (VVNAVRKLQESG) is extended SH2 subdomain (ESS). Positions 46 to 142 (FYWSAVTGGE…APSFPSPPTE (97 aa)) constitute an SH2 domain. Residues 131–142 (PGAPSFPSPPTE) are compositionally biased toward pro residues. The tract at residues 131-162 (PGAPSFPSPPTEPSSEVPEQPSAQPLPGSPPR) is disordered. The segment covering 143-155 (PSSEVPEQPSAQP) has biased composition (low complexity). The region spanning 177–224 (VLSRPLSSNVATLQHLCRKTVNGHLDSYEKVTQLPGPIREFLDQYDAP) is the SOCS box domain.

Interacts with multiple activated proteins of the tyrosine kinase signaling pathway including IGF1 receptor, insulin receptor and JAK2. Binding to JAK2 is mediated through the KIR and SH2 domains to a phosphorylated tyrosine residue within the JAK2 JH1 domain. Binds specific activated tyrosine residues of the leptin, EPO, IL12, GSCF and gp130 receptors. Interaction with CSNK1E stabilizes SOCS3 protein. Component of the probable ECS(SOCS3) E3 ubiquitin-protein ligase complex which contains CUL5, RNF7/RBX2, Elongin BC complex and SOCS3. Interacts with CUL5, RNF7, ELOB and ELOC. Interacts with CUL2. Interacts with FGFR3. Interacts with INSR. Interacts with BCL10; this interaction may interfere with BCL10-binding with PELI2. Interacts with NOD2 (via CARD domain); the interaction promotes NOD2 degradation. In terms of processing, phosphorylated on tyrosine residues after stimulation by the cytokines, IL-2, EPO or IGF1. As to expression, widely expressed with high expression in heart, placenta, skeletal muscle, peripheral blood leukocytes, fetal and adult lung, and fetal liver and kidney. Lower levels in thymus.

It participates in protein modification; protein ubiquitination. Its function is as follows. SOCS family proteins form part of a classical negative feedback system that regulates cytokine signal transduction. SOCS3 is involved in negative regulation of cytokines that signal through the JAK/STAT pathway. Inhibits cytokine signal transduction by binding to tyrosine kinase receptors including IL6ST/gp130, LIF, erythropoietin, insulin, IL12, GCSF and leptin receptors. Binding to JAK2 inhibits its kinase activity and regulates IL6 signaling. Suppresses fetal liver erythropoiesis. Regulates onset and maintenance of allergic responses mediated by T-helper type 2 cells. Probable substrate recognition component of a SCF-like ECS (Elongin BC-CUL2/5-SOCS-box protein) E3 ubiquitin-protein ligase complex which mediates the ubiquitination and subsequent proteasomal degradation of target proteins. This Homo sapiens (Human) protein is Suppressor of cytokine signaling 3.